The chain runs to 194 residues: Probable proteasome subunit beta type-4 (194 aa).

The protein belongs to the peptidase T1B family. As to quaternary structure, the 26S proteasome consists of a 20S proteasome core and two 19S regulatory subunits. The 20S proteasome core is composed of 28 subunits that are arranged in four stacked rings, resulting in a barrel-shaped structure. The two end rings are each formed by seven alpha subunits, and the two central rings are each formed by seven beta subunits. The catalytic chamber with the active sites is on the inside of the barrel.

The protein localises to the cytoplasm. It is found in the nucleus. Non-catalytic component of the proteasome, a multicatalytic proteinase complex which is characterized by its ability to cleave peptides with Arg, Phe, Tyr, Leu, and Glu adjacent to the leaving group at neutral or slightly basic pH. The proteasome has an ATP-dependent proteolytic activity. The sequence is that of Probable proteasome subunit beta type-4 from Schizosaccharomyces pombe (strain 972 / ATCC 24843) (Fission yeast).